The primary structure comprises 231 residues: Small ribosomal subunit protein uS3 (231 aa).

The 80-residue stretch at 18 to 97 (VDEYLAKQFY…NPELNARVMA (80 aa)) folds into the KH type-2 domain.

This sequence belongs to the universal ribosomal protein uS3 family. Part of the 30S ribosomal subunit.

Its function is as follows. Binds the lower part of the 30S subunit head. The protein is Small ribosomal subunit protein uS3 of Sulfolobus acidocaldarius (strain ATCC 33909 / DSM 639 / JCM 8929 / NBRC 15157 / NCIMB 11770).